A 177-amino-acid polypeptide reads, in one-letter code: Transcription antitermination protein NusB (177 aa).

The segment at 1-36 is disordered; it reads MTEQPTKPTGSRPPRQPRTGLTSTGARKAGSKSDRS.

The protein belongs to the NusB family.

Functionally, involved in transcription antitermination. Required for transcription of ribosomal RNA (rRNA) genes. Binds specifically to the boxA antiterminator sequence of the ribosomal RNA (rrn) operons. In Albidiferax ferrireducens (strain ATCC BAA-621 / DSM 15236 / T118) (Rhodoferax ferrireducens), this protein is Transcription antitermination protein NusB.